We begin with the raw amino-acid sequence, 394 residues long: Guanine nucleotide-binding protein G(s) subunit alpha (394 aa).

The interval 1–23 is disordered; that stretch reads MGCLGNSKTEDQRNEEKAQREAN. A lipid anchor (N-palmitoyl glycine) is attached at G2. C3 carries the S-palmitoyl cysteine lipid modification. The segment covering 8-23 has biased composition (basic and acidic residues); that stretch reads KTEDQRNEEKAQREAN. The G-alpha domain maps to 39–394; the sequence is ATHRLLLLGA…RMHLRQYELL (356 aa). Residues 42 to 55 form a G1 motif region; it reads RLLLLGAGESGKST. 47 to 55 is a GTP binding site; that stretch reads GAGESGKST. Residue S54 participates in Mg(2+) binding. The disordered stretch occupies residues 68–91; sequence FNGEGGEEDPQAARSNSDGEKATK. The interval 196–204 is G2 motif; it reads DLLRCRVLT. GTP-binding positions include 197–204, 223–227, 292–295, and A366; these read LLRCRVLT, DVGGQ, and NKQD. T204 is a binding site for Mg(2+). The tract at residues 219–228 is G3 motif; that stretch reads FHMFDVGGQR. The interval 288-295 is G4 motif; it reads ILFLNKQD. Residues 364–369 are G5 motif; the sequence is TCAVDT.

The protein belongs to the G-alpha family. G(s) subfamily. Heterotrimeric G proteins are composed of 3 units; alpha, beta and gamma. The alpha chain contains the guanine nucleotide binding site. Interacts with CRY1; the interaction may block GPCR-mediated regulation of cAMP concentrations. Interacts with ADCY6 and stimulates its adenylyl cyclase activity. Interacts with ADCY2 and ADCY5. Stimulates the ADCY5 adenylyl cyclase activity. Interaction with SASH1.

It localises to the cell membrane. Functionally, guanine nucleotide-binding proteins (G proteins) function as transducers in numerous signaling pathways controlled by G protein-coupled receptors (GPCRs). Signaling involves the activation of adenylyl cyclases, resulting in increased levels of the signaling molecule cAMP. GNAS functions downstream of several GPCRs, including beta-adrenergic receptors. Stimulates the Ras signaling pathway via RAPGEF2. This Canis lupus familiaris (Dog) protein is Guanine nucleotide-binding protein G(s) subunit alpha (GNAS).